Reading from the N-terminus, the 520-residue chain is Sterile alpha motif domain-containing protein 3 (520 aa).

Residues 4 to 71 enclose the SAM domain; it reads WSVDQVCKWL…KYKQGNQELK (68 aa). Residues 67-104 form a disordered region; the sequence is NQELKPTGGPADTSTLTPAQAAPEHEQNPSPTSHGDQT. Residues 94–104 are compositionally biased toward polar residues; it reads NPSPTSHGDQT.

This Mus musculus (Mouse) protein is Sterile alpha motif domain-containing protein 3 (Samd3).